The sequence spans 664 residues: Translation factor guf1, mitochondrial (664 aa).

The transit peptide at 1–43 (MRGCLQLARWLSAAPKGTAASLTRAPFGLANATRFFTNSAARA) directs the protein to the mitochondrion. In terms of domain architecture, tr-type G spans 66 to 246 (ERYRNFCIVA…TVVDKIPAPI (181 aa)). Residues 75–82 (AHVDHGKS), 139–143 (DTPGH), and 193–196 (NKVD) contribute to the GTP site.

Belongs to the TRAFAC class translation factor GTPase superfamily. Classic translation factor GTPase family. LepA subfamily.

It localises to the mitochondrion inner membrane. It carries out the reaction GTP + H2O = GDP + phosphate + H(+). In terms of biological role, promotes mitochondrial protein synthesis. May act as a fidelity factor of the translation reaction, by catalyzing a one-codon backward translocation of tRNAs on improperly translocated ribosomes. Binds to mitochondrial ribosomes in a GTP-dependent manner. This Aspergillus clavatus (strain ATCC 1007 / CBS 513.65 / DSM 816 / NCTC 3887 / NRRL 1 / QM 1276 / 107) protein is Translation factor guf1, mitochondrial (guf1).